The chain runs to 156 residues: Low molecular weight phosphotyrosine protein phosphatase (156 aa).

Cys11 acts as the Nucleophile in catalysis. Arg17 is an active-site residue. Asp128 acts as the Proton donor in catalysis.

The protein belongs to the low molecular weight phosphotyrosine protein phosphatase family.

Its subcellular location is the cytoplasm. The catalysed reaction is O-phospho-L-tyrosyl-[protein] + H2O = L-tyrosyl-[protein] + phosphate. It carries out the reaction a phosphate monoester + H2O = an alcohol + phosphate. Functionally, may contribute to dephosphorylation of 'Tyr-15' of cdc2. The chain is Low molecular weight phosphotyrosine protein phosphatase (stp1) from Schizosaccharomyces pombe (strain 972 / ATCC 24843) (Fission yeast).